The sequence spans 132 residues: Fatty acid-binding protein 12 (132 aa).

A fatty acid contacts are provided by residues R107 and 127–129 (RTY).

The protein belongs to the calycin superfamily. Fatty-acid binding protein (FABP) family. Highly expressed in adult retina and testis.

In terms of biological role, may play a role in lipid transport. This Mus musculus (Mouse) protein is Fatty acid-binding protein 12 (Fabp12).